The following is a 179-amino-acid chain: TPD1 protein homolog 1 (179 aa).

The N-terminal stretch at 1–30 (MRMEHIYKFQHWLFFIGLGVLLSLSLSVKA) is a signal peptide.

This is TPD1 protein homolog 1 from Arabidopsis thaliana (Mouse-ear cress).